The primary structure comprises 227 residues: Small ribosomal subunit protein uS3 (227 aa).

The KH type-2 domain occupies 39–107 (VRQLLQKRLK…PVHITIEEVR (69 aa)).

The protein belongs to the universal ribosomal protein uS3 family. As to quaternary structure, part of the 30S ribosomal subunit. Forms a tight complex with proteins S10 and S14.

In terms of biological role, binds the lower part of the 30S subunit head. Binds mRNA in the 70S ribosome, positioning it for translation. In Coxiella burnetii (strain CbuK_Q154) (Coxiella burnetii (strain Q154)), this protein is Small ribosomal subunit protein uS3.